A 976-amino-acid polypeptide reads, in one-letter code: Alpha-amylase (976 aa).

Residues 1-33 form the signal peptide; the sequence is MKRGKLWGRLVSAAGLSLSIFLSSIGNVSTAYA. The interval 45–98 is disordered; that stretch reads TKENTESATDASSNEASDAEADNDTDEAITDASSKELSAENDGASESDSSFDEY. Low complexity predominate over residues 50 to 60; it reads ESATDASSNEA. 2 stretches are compositionally biased toward acidic residues: residues 61–73 and 87–96; these read SDAE…DEAI and GASESDSSFD. The Ca(2+) site is built by N243, T284, and D293. D323 functions as the Nucleophile in the catalytic mechanism. H327 contacts Ca(2+). The active-site Proton donor is E375.

The protein belongs to the glycosyl hydrolase 13 family. Monomer. It depends on Ca(2+) as a cofactor.

It catalyses the reaction Endohydrolysis of (1-&gt;4)-alpha-D-glucosidic linkages in polysaccharides containing three or more (1-&gt;4)-alpha-linked D-glucose units.. The polypeptide is Alpha-amylase (amyA) (Butyrivibrio fibrisolvens).